The sequence spans 222 residues: Protein THYLAKOID ASSEMBLY 8, chloroplastic (222 aa).

A chloroplast-targeting transit peptide spans 1–32 (MALSLSQTRPPSLSHSHTLSVIVPKRTFVSIR). 2 PPR repeats span residues 115–149 (DLVL…DQRS) and 150–184 (DDKA…GWGS).

It belongs to the PPR family. P subfamily.

Its subcellular location is the plastid. It localises to the chloroplast thylakoid membrane. Its function is as follows. Essential protein required during embryogenesis. Mediates group II organellar RNA introns splicing (e.g. ycf3-2 and trnA). Binds weakly to specific RNA. Promotes the biogenesis of chloroplast thylakoid membranes. This is Protein THYLAKOID ASSEMBLY 8, chloroplastic from Arabidopsis thaliana (Mouse-ear cress).